The chain runs to 541 residues: Chaperonin GroEL 2 (541 aa).

ATP-binding positions include 29 to 32, 86 to 90, G413, 476 to 478, and D492; these read TLGP, DGTTT, and NAA.

This sequence belongs to the chaperonin (HSP60) family. In terms of assembly, forms a cylinder of 14 subunits composed of two heptameric rings stacked back-to-back. Interacts with the co-chaperonin GroES.

The protein localises to the secreted. The protein resides in the capsule. It localises to the cell surface. Its subcellular location is the cell wall. It catalyses the reaction ATP + H2O + a folded polypeptide = ADP + phosphate + an unfolded polypeptide.. Its function is as follows. Together with its co-chaperonin GroES, plays an essential role in assisting protein folding. The GroEL-GroES system forms a nano-cage that allows encapsulation of the non-native substrate proteins and provides a physical environment optimized to promote and accelerate protein folding. This Mycobacterium leprae (strain TN) protein is Chaperonin GroEL 2.